We begin with the raw amino-acid sequence, 79 residues long: Beta-hexatoxin-Mg1a (79 aa).

The N-terminal stretch at 1–20 is a signal peptide; the sequence is MKAPATTLILVMSLISVLWA. A propeptide spanning residues 21 to 50 is cleaved from the precursor; it reads TPDLEEGDLLAELGDLIATDDEYPMKPEER. 3 disulfides stabilise this stretch: cysteine 52/cysteine 66, cysteine 59/cysteine 71, and cysteine 65/cysteine 76.

This sequence belongs to the neurotoxin 15 family. 01 (magi-5) subfamily. In terms of tissue distribution, expressed by the venom gland.

The protein resides in the secreted. Insect and vertebrate active toxin. Binds to site 4 of mammalian voltage-gated sodium channels and shifts the activation voltage of the mammalian Nav1.2a/SCN2A channel to more hyperpolarized voltages, whereas the insect channel, DmNav1 (para), is not affected. Competes for binding at site 3 of the insect sodium channel. Causes temporary paralysis when injected into lepidopteran larvae at 8.6 nmol/g. A low intracranial injection dose into mice causes lacrimation, closure of the eyes and sweating. A high injection dose causes extensive lacrimation and death. The protein is Beta-hexatoxin-Mg1a of Macrothele gigas (Japanese funnel web spider).